We begin with the raw amino-acid sequence, 294 residues long: ATP synthase gamma chain (294 aa).

The protein belongs to the ATPase gamma chain family. In terms of assembly, F-type ATPases have 2 components, CF(1) - the catalytic core - and CF(0) - the membrane proton channel. CF(1) has five subunits: alpha(3), beta(3), gamma(1), delta(1), epsilon(1). CF(0) has three main subunits: a, b and c.

The protein resides in the cell inner membrane. Its function is as follows. Produces ATP from ADP in the presence of a proton gradient across the membrane. The gamma chain is believed to be important in regulating ATPase activity and the flow of protons through the CF(0) complex. The protein is ATP synthase gamma chain of Campylobacter lari (strain RM2100 / D67 / ATCC BAA-1060).